The following is a 491-amino-acid chain: Transmembrane protein 200A (491 aa).

Over 1–61 (MIATGGVITG…RGKIRLYSPS (61 aa)) the chain is Cytoplasmic. Residues 16–41 (RQDSARSQQHVNLSPSPATQEKKPIR) form a disordered region. Residues 20–34 (ARSQQHVNLSPSPAT) are compositionally biased toward polar residues. A helical membrane pass occupies residues 62–82 (GFFLILGVLISIIGIAMAVLG). At 83–126 (YWPQKEHFIDAETTLSTNETQVIRNEGGVVVRFFEQHLHSDKMK) the chain is on the extracellular side. Asn100 is a glycosylation site (N-linked (GlcNAc...) asparagine). A helical membrane pass occupies residues 127 to 147 (MLGPFTMGIGIFIFICANAIL). Over 148–491 (HENRDKETKI…LKRGTSETRF (344 aa)) the chain is Cytoplasmic. Phosphoserine is present on Ser350.

It belongs to the TMEM200 family. Expressed in cerebellum.

The protein resides in the membrane. The protein is Transmembrane protein 200A (TMEM200A) of Homo sapiens (Human).